The following is a 299-amino-acid chain: Peroxisomal biogenesis factor 19 (299 aa).

Alanine 2 is subject to N-acetylalanine. The tract at residues 2-56 (AAAEGGCGAGVEADRELEELLESALDDFDKAKPSPAPSPTISAPDASGPQKRSPG) is docking to the peroxisome membrane and binding to PEX3. A necessary for PEX19 function on peroxisome biogenesis region spans residues 2 to 91 (AAAEGGCGAG…QATAEFEKAM (90 aa)). Residues 25–63 (ALDDFDKAKPSPAPSPTISAPDASGPQKRSPGDTAKDAL) form a disordered region. Serine 35, serine 39, serine 54, and serine 66 each carry phosphoserine. Threonine 236 is modified (phosphothreonine). Position 296 is a cysteine methyl ester (cysteine 296). Cysteine 296 is lipidated: S-farnesyl cysteine. Residues 297–299 (LIM) constitute a propeptide, removed in mature form.

This sequence belongs to the peroxin-19 family. As to quaternary structure, interacts with a broad range of peroxisomal membrane proteins, including PEX3, PEX10, PEX11A, PEX11B, PEX12, PEX13, PEX14 and PEX16, PXMP2/PMP22, PXMP4/PMP24, SLC25A17/PMP34, ABCD1/ALDP, ABCD2/ALDRP, and ABCD3/PMP70. Also interacts with the tumor suppressor CDKN2A/p19ARF.

Its subcellular location is the cytoplasm. The protein resides in the peroxisome membrane. Functionally, necessary for early peroxisomal biogenesis. Acts both as a cytosolic chaperone and as an import receptor for peroxisomal membrane proteins (PMPs). Binds and stabilizes newly synthesized PMPs in the cytoplasm by interacting with their hydrophobic membrane-spanning domains, and targets them to the peroxisome membrane by binding to the integral membrane protein PEX3. Excludes CDKN2A from the nucleus and prevents its interaction with MDM2, which results in active degradation of TP53. The protein is Peroxisomal biogenesis factor 19 (Pex19) of Rattus norvegicus (Rat).